We begin with the raw amino-acid sequence, 105 residues long: Heat shock protein HspQ (105 aa).

The disordered stretch occupies residues 75-105; it reads SELQDEHPEQPSMDELAQTIRKQLQAPRLRN.

This sequence belongs to the HspQ family.

Its subcellular location is the cytoplasm. Involved in the degradation of certain denaturated proteins, including DnaA, during heat shock stress. This is Heat shock protein HspQ from Escherichia coli O127:H6 (strain E2348/69 / EPEC).